The following is a 132-amino-acid chain: Small ribosomal subunit protein uS8c (132 aa).

This sequence belongs to the universal ribosomal protein uS8 family. Part of the 30S ribosomal subunit.

It localises to the plastid. It is found in the chloroplast. Its function is as follows. One of the primary rRNA binding proteins, it binds directly to 16S rRNA central domain where it helps coordinate assembly of the platform of the 30S subunit. In Anthoceros angustus (Hornwort), this protein is Small ribosomal subunit protein uS8c (rps8).